The sequence spans 744 residues: Merozoite surface protein 9 (744 aa).

Positions 1-23 (MMNMKIVLFSLLLFVIRWNIISC) are cleaved as a signal peptide. An interaction with MSP1 and host SLC4A1/Band 3 region spans residues 77–235 (KELLKEKQYT…VNDEDDVNDE (159 aa)). 4 disordered regions span residues 202–282 (KSQG…ATAY), 459–487 (DNQA…PTED), 512–540 (NNTP…ENFD), and 666–744 (VDAL…EESK). The span at 211–224 (SQNQNENNDNQKYQ) shows a compositional bias: polar residues. Repeat copies occupy residues 226-231 (VNDEDD), 232-237 (VNDEED), 238-243 (TNDDED), 244-249 (TNDEED), 250-255 (TNDDED), 256-261 (TNDDED), 262-267 (TNDEED), and 268-273 (TNDEED). The segment at 226-273 (VNDEDDVNDEEDTNDDEDTNDEEDTNDDEDTNDDEDTNDEEDTNDEED) is 8 X 6 AA tandem repeats of [VT]-N-D-[ED]-[ED]-D. A compositionally biased stretch (acidic residues) spans 226 to 274 (VNDEDDVNDEEDTNDDEDTNDEEDTNDDEDTNDDEDTNDEEDTNDEEDH). Positions 364–528 (LKDNLINYEF…PPTQSKKKNK (165 aa)) are interaction with MSP1 and host SLC4A1/Band 3. Positions 459–473 (DNQAVDTKSMEEPKV) are enriched in basic and acidic residues. Residues 512–521 (NNTPNVVPPT) show a composition bias toward low complexity. Residues 644–734 (NQETEEEMEK…QEEEEEEEIV (91 aa)) adopt a coiled-coil conformation. 2 stretches are compositionally biased toward basic and acidic residues: residues 672–698 (KNKE…KEKE) and 706–719 (EKEK…KEEK). Residues 720–734 (EKEEEQEEEEEEEIV) show a composition bias toward acidic residues.

This sequence belongs to the plasmodium ABRA family. As to quaternary structure, forms a complex composed of MSP1, MSP6, MSP7, MSP9 and MSP3; within the complex, MSP6 and MSP9 mediate the binding to the host erythrocyte. Interacts with MSP1 subunits p19 and p42; the interaction is direct. Interacts with host SLC4A1/Band 3 protein (via the 5ABC region). MSP1 subunits p19 or p42, and MSP9 form a co-ligand complex that interacts with host SLC4A1/Band 3 protein. Post-translationally, not glycosylated.

Its subcellular location is the cell membrane. It localises to the parasitophorous vacuole lumen. It is found in the secreted. During the asexual blood stage, involved in the sialic acid-independent (SAID) merozoite invasion of host erythrocytes by binding to host SLC4A1/Band 3 protein on the surface of the host erythrocyte. This is Merozoite surface protein 9 from Plasmodium falciparum (isolate 7G8).